The sequence spans 96 residues: Accessory cholera enterotoxin (96 aa).

A helical transmembrane segment spans residues 76 to 96; it reads QALAIVLQALMTRFALRALNL.

It localises to the secreted. It is found in the host cell membrane. Functionally, increases short-circuit current in rabbit ileal tissue mounted in Ussing chambers, by increasing the potential difference. Cultures of V.cholerae containing the cloned ace gene cause fluid secretion in ligated rabbit ileal loops. The sequence is that of Accessory cholera enterotoxin (ace) from Vibrio cholerae serotype O1 (strain ATCC 39315 / El Tor Inaba N16961).